Consider the following 555-residue polypeptide: Formate--tetrahydrofolate ligase (555 aa).

Residue 64 to 71 coordinates ATP; the sequence is TKAGIGKT.

This sequence belongs to the formate--tetrahydrofolate ligase family.

It carries out the reaction (6S)-5,6,7,8-tetrahydrofolate + formate + ATP = (6R)-10-formyltetrahydrofolate + ADP + phosphate. Its pathway is one-carbon metabolism; tetrahydrofolate interconversion. This is Formate--tetrahydrofolate ligase from Bacteroides fragilis (strain ATCC 25285 / DSM 2151 / CCUG 4856 / JCM 11019 / LMG 10263 / NCTC 9343 / Onslow / VPI 2553 / EN-2).